Consider the following 273-residue polypeptide: Large ribosomal subunit protein uL2 (273 aa).

The segment at 228 to 273 (VDHPHGGGEGKTSGGRHPVTPWGFPTKGKKTRKNKRTSKFIVKKRK) is disordered. The segment covering 254–273 (KGKKTRKNKRTSKFIVKKRK) has biased composition (basic residues).

It belongs to the universal ribosomal protein uL2 family. As to quaternary structure, part of the 50S ribosomal subunit. Forms a bridge to the 30S subunit in the 70S ribosome.

Its function is as follows. One of the primary rRNA binding proteins. Required for association of the 30S and 50S subunits to form the 70S ribosome, for tRNA binding and peptide bond formation. It has been suggested to have peptidyltransferase activity; this is somewhat controversial. Makes several contacts with the 16S rRNA in the 70S ribosome. This chain is Large ribosomal subunit protein uL2, found in Rickettsia canadensis (strain McKiel).